The sequence spans 556 residues: Dihydroxy-acid dehydratase (556 aa).

Asp-81 contributes to the Mg(2+) binding site. Cys-122 serves as a coordination point for [2Fe-2S] cluster. Asp-123 and Lys-124 together coordinate Mg(2+). Residue Lys-124 is modified to N6-carboxylysine. A [2Fe-2S] cluster-binding site is contributed by Cys-196. Position 444 (Glu-444) interacts with Mg(2+). Ser-470 (proton acceptor) is an active-site residue.

It belongs to the IlvD/Edd family. In terms of assembly, homodimer. The cofactor is [2Fe-2S] cluster. Mg(2+) serves as cofactor.

The enzyme catalyses (2R)-2,3-dihydroxy-3-methylbutanoate = 3-methyl-2-oxobutanoate + H2O. It catalyses the reaction (2R,3R)-2,3-dihydroxy-3-methylpentanoate = (S)-3-methyl-2-oxopentanoate + H2O. Its pathway is amino-acid biosynthesis; L-isoleucine biosynthesis; L-isoleucine from 2-oxobutanoate: step 3/4. The protein operates within amino-acid biosynthesis; L-valine biosynthesis; L-valine from pyruvate: step 3/4. Functions in the biosynthesis of branched-chain amino acids. Catalyzes the dehydration of (2R,3R)-2,3-dihydroxy-3-methylpentanoate (2,3-dihydroxy-3-methylvalerate) into 2-oxo-3-methylpentanoate (2-oxo-3-methylvalerate) and of (2R)-2,3-dihydroxy-3-methylbutanoate (2,3-dihydroxyisovalerate) into 2-oxo-3-methylbutanoate (2-oxoisovalerate), the penultimate precursor to L-isoleucine and L-valine, respectively. The sequence is that of Dihydroxy-acid dehydratase from Syntrophotalea carbinolica (strain DSM 2380 / NBRC 103641 / GraBd1) (Pelobacter carbinolicus).